We begin with the raw amino-acid sequence, 361 residues long: Phospho-N-acetylmuramoyl-pentapeptide-transferase (361 aa).

10 helical membrane-spanning segments follow: residues 17–37 (SIYL…LFAG), 66–86 (GTPT…SIFI), 90–110 (TNSL…IGFI), 129–149 (LLFQ…IGLT), 162–182 (ISAY…QIVL), 197–217 (GLAI…AYFT), 232–252 (VGSG…LGFL), 261–281 (IFMG…IAII), 286–306 (LMLP…ILQV), and 340–360 (FWIG…MRGI).

Belongs to the glycosyltransferase 4 family. MraY subfamily. The cofactor is Mg(2+).

Its subcellular location is the cell inner membrane. The enzyme catalyses UDP-N-acetyl-alpha-D-muramoyl-L-alanyl-gamma-D-glutamyl-meso-2,6-diaminopimeloyl-D-alanyl-D-alanine + di-trans,octa-cis-undecaprenyl phosphate = di-trans,octa-cis-undecaprenyl diphospho-N-acetyl-alpha-D-muramoyl-L-alanyl-D-glutamyl-meso-2,6-diaminopimeloyl-D-alanyl-D-alanine + UMP. Its pathway is cell wall biogenesis; peptidoglycan biosynthesis. Its function is as follows. Catalyzes the initial step of the lipid cycle reactions in the biosynthesis of the cell wall peptidoglycan: transfers peptidoglycan precursor phospho-MurNAc-pentapeptide from UDP-MurNAc-pentapeptide onto the lipid carrier undecaprenyl phosphate, yielding undecaprenyl-pyrophosphoryl-MurNAc-pentapeptide, known as lipid I. This chain is Phospho-N-acetylmuramoyl-pentapeptide-transferase, found in Fusobacterium nucleatum subsp. nucleatum (strain ATCC 25586 / DSM 15643 / BCRC 10681 / CIP 101130 / JCM 8532 / KCTC 2640 / LMG 13131 / VPI 4355).